The chain runs to 554 residues: MNSKEVTKGVARAPHRSLFYAMGYTPEDLKKPLIGIVNSHNEIIPGHFHLNEIVQAVKLGVASAGGTPIEIPSIGICDGISMNHSGMKYPLASRELIADSIEAMTIAHKFDALVLVGNCDKIVPGMLMGAARLNVPAIYVSGGPMLPGKLKGKKIDLVHGAFEAVGSYAEGILSDDDLNKIEQHSCPTCGSCAGLFTANSMNSLAEALGVALPGNGTIPAPYGRRKQLAKYAGVKIMELVKKKIKLRDILTKEAFKNAIALDMAIGGSSNTTLHLMAIAHEAKVYLTLEDFDEISRRIPHITKLSPAGTHHMVDLDEAGGISAVLKELMDANLIFKDQLTVTGKTLEENIKNSLVLNDSVIRPLNNPYSNEGGIAILRGNLAPDGAVVKQSAVEPEMLYHKGVARVFDGEELAFDAIMNKKIHPGDVVVIRYEGPKGCPGMREMLSPTAAIIGLGLEKSTALITDGRFSGGTRGPCIGHISPEASEGGPIALIEEGDLIEIDISNRRISLLVSPEELSKRKENWIQPPCKAPDGTYLKRYSKLVTSASTGAVLE.

A Mg(2+)-binding site is contributed by aspartate 78. A [2Fe-2S] cluster-binding site is contributed by cysteine 119. Mg(2+)-binding residues include aspartate 120 and lysine 121. Lysine 121 is subject to N6-carboxylysine. A [2Fe-2S] cluster-binding site is contributed by cysteine 192. Mg(2+) is bound at residue glutamate 443. Catalysis depends on serine 469, which acts as the Proton acceptor.

This sequence belongs to the IlvD/Edd family. In terms of assembly, homodimer. [2Fe-2S] cluster is required as a cofactor. Mg(2+) serves as cofactor.

It catalyses the reaction (2R)-2,3-dihydroxy-3-methylbutanoate = 3-methyl-2-oxobutanoate + H2O. It carries out the reaction (2R,3R)-2,3-dihydroxy-3-methylpentanoate = (S)-3-methyl-2-oxopentanoate + H2O. The protein operates within amino-acid biosynthesis; L-isoleucine biosynthesis; L-isoleucine from 2-oxobutanoate: step 3/4. It participates in amino-acid biosynthesis; L-valine biosynthesis; L-valine from pyruvate: step 3/4. Functions in the biosynthesis of branched-chain amino acids. Catalyzes the dehydration of (2R,3R)-2,3-dihydroxy-3-methylpentanoate (2,3-dihydroxy-3-methylvalerate) into 2-oxo-3-methylpentanoate (2-oxo-3-methylvalerate) and of (2R)-2,3-dihydroxy-3-methylbutanoate (2,3-dihydroxyisovalerate) into 2-oxo-3-methylbutanoate (2-oxoisovalerate), the penultimate precursor to L-isoleucine and L-valine, respectively. This chain is Dihydroxy-acid dehydratase, found in Clostridium novyi (strain NT).